Here is a 380-residue protein sequence, read N- to C-terminus: Glucose-1-phosphate adenylyltransferase (380 aa).

Alpha-D-glucose 1-phosphate-binding positions include Tyr100, Gly165, 180–181 (EK), and Ser191.

The protein belongs to the bacterial/plant glucose-1-phosphate adenylyltransferase family. As to quaternary structure, homotetramer.

It catalyses the reaction alpha-D-glucose 1-phosphate + ATP + H(+) = ADP-alpha-D-glucose + diphosphate. The protein operates within glycan biosynthesis; glycogen biosynthesis. Its function is as follows. Involved in the biosynthesis of ADP-glucose, a building block required for the elongation reactions to produce glycogen. Catalyzes the reaction between ATP and alpha-D-glucose 1-phosphate (G1P) to produce pyrophosphate and ADP-Glc. The polypeptide is Glucose-1-phosphate adenylyltransferase (Clostridium acetobutylicum (strain ATCC 824 / DSM 792 / JCM 1419 / IAM 19013 / LMG 5710 / NBRC 13948 / NRRL B-527 / VKM B-1787 / 2291 / W)).